Consider the following 583-residue polypeptide: Threonine--tRNA ligase (583 aa).

Positions 185–478 (DHRKLGRELN…LVEHYGGAFP (294 aa)) are catalytic. Zn(2+)-binding residues include Cys-278, His-329, and His-455.

It belongs to the class-II aminoacyl-tRNA synthetase family. As to quaternary structure, homodimer. Zn(2+) is required as a cofactor.

It localises to the cytoplasm. It catalyses the reaction tRNA(Thr) + L-threonine + ATP = L-threonyl-tRNA(Thr) + AMP + diphosphate + H(+). Catalyzes the attachment of threonine to tRNA(Thr) in a two-step reaction: L-threonine is first activated by ATP to form Thr-AMP and then transferred to the acceptor end of tRNA(Thr). Also edits incorrectly charged L-seryl-tRNA(Thr). This is Threonine--tRNA ligase from Borrelia duttonii (strain Ly).